The primary structure comprises 37 residues: Large ribosomal subunit protein bL36c (37 aa).

As to quaternary structure, component of the chloroplast large ribosomal subunit (LSU). Mature 70S chloroplast ribosomes of higher plants consist of a small (30S) and a large (50S) subunit. The 30S small subunit contains 1 molecule of ribosomal RNA (16S rRNA) and 24 different proteins. The 50S large subunit contains 3 rRNA molecules (23S, 5S and 4.5S rRNA) and 33 different proteins.

Its subcellular location is the plastid. The protein localises to the chloroplast. Functionally, component of the chloroplast ribosome (chloro-ribosome), a dedicated translation machinery responsible for the synthesis of chloroplast genome-encoded proteins, including proteins of the transcription and translation machinery and components of the photosynthetic apparatus. The polypeptide is Large ribosomal subunit protein bL36c (rpl36) (Spinacia oleracea (Spinach)).